The sequence spans 662 residues: MGNGVTKLSICFTGGGGERLRPKDISVLLPDPLDEGLGHSFCYVRPDPTLISSSKVHSEEDTTTTTFRTISGASVSANTATPLSTSLYDPYGHIDRAAAFESTTSFSSIPLQPIPKSSGPIVLGSGPIERGFLSGPIERGFMSGPLDRVGLFSGPLDKPNSDHHHQFQRSFSHGLALRVGSRKRSLVRILRRAISKTMSRGQNSIVAPIKSVKDSDNWGIRSEKSRNLHNENLTVNSLNFSSEVSLDDDVSLENQNLQWAQGKAGEDRVHVVVSEEHGWLFVGIYDGFNGPDAPDYLLSHLYPVVHRELKGLLWDDSNVESKSQDLERSNGDESCSNQEKDETCERWWRCEWDRESQDLDRRLKEQISRRSGSDRLTNHSEVLEALSQALRKTEEAYLDTADKMLDENPELALMGSCVLVMLMKGEDIYVMNVGDSRAVLGQKSEPDYWLAKIRQDLERINEETMMNDLEGCEGDQSSLVPNLSAFQLTVDHSTNIEEEVERIRNEHPDDVTAVTNERVKGSLKVTRAFGAGFLKQPKWNNALLEMFQIDYVGKSPYINCLPSLYHHRLGSKDRFLILSSDGLYQYFTNEEAVSEVELFITLQPEGDPAQHLVQELLFRAAKKAGMDFHELLEIPQGERRRYHDDVSIVVISLEGRMWKSCV.

Ser153 carries the phosphoserine modification. One can recognise a PPM-type phosphatase domain in the interval Asp249–Leu653. Asp286, Gly287, Asp581, and Asp644 together coordinate Mn(2+).

The protein belongs to the PP2C family. Mg(2+) serves as cofactor. The cofactor is Mn(2+). As to expression, expressed in seedlings, roots, leaves, stems, young inflorescences, flowers and siliques.

It localises to the nucleus. It carries out the reaction O-phospho-L-seryl-[protein] + H2O = L-seryl-[protein] + phosphate. The catalysed reaction is O-phospho-L-threonyl-[protein] + H2O = L-threonyl-[protein] + phosphate. In terms of biological role, involved in leaf development regulation. This chain is Probable protein phosphatase 2C 4 (PLL5), found in Arabidopsis thaliana (Mouse-ear cress).